Here is a 133-residue protein sequence, read N- to C-terminus: Helix-loop-helix protein 1 (133 aa).

The tract at residues 1 to 79 (MMLNSDTMEL…RRATAKYRTA (79 aa)) is disordered. Residues 25 to 45 (DCGGGAGPDGAGPGGPGGGQA) show a composition bias toward gly residues. Positions 52–65 (EPGRKDLQHLSREE) are enriched in basic and acidic residues. The span at 66 to 79 (RRRRRRATAKYRTA) shows a compositional bias: basic residues. In terms of domain architecture, bHLH spans 75-127 (KYRTAHATRERIRVEAFNLAFAELRKLLPTLPPDKKLSKIEILRLAICYISYL).

Efficient DNA binding requires dimerization with another bHLH protein.

The protein localises to the nucleus. Its function is as follows. May serve as DNA-binding protein and may be involved in the control of cell-type determination, possibly within the developing nervous system. The protein is Helix-loop-helix protein 1 (NHLH1) of Homo sapiens (Human).